We begin with the raw amino-acid sequence, 206 residues long: Large ribosomal subunit protein uL4 (206 aa).

A disordered region spans residues 47 to 75 (GTQSAKTRAEVSGGGIKPWRQKGTGRARQ).

The protein belongs to the universal ribosomal protein uL4 family. Part of the 50S ribosomal subunit.

Its function is as follows. One of the primary rRNA binding proteins, this protein initially binds near the 5'-end of the 23S rRNA. It is important during the early stages of 50S assembly. It makes multiple contacts with different domains of the 23S rRNA in the assembled 50S subunit and ribosome. Functionally, forms part of the polypeptide exit tunnel. The protein is Large ribosomal subunit protein uL4 of Clostridium botulinum (strain 657 / Type Ba4).